A 525-amino-acid chain; its full sequence is G-protein regulator 1 (525 aa).

The region spanning 424–445 (PVDMMDLIFSMSSRMDDQRTEL) is the GoLoco domain. The tract at residues 488–525 (HTMNRILKRSKKSKSSLDSTNSMQGDDTRSDDVTMTSK) is disordered.

In terms of assembly, interacts with gpr-1, lin-5 and GDP-bound goa-1.

It localises to the cytoplasm. The protein localises to the cell cortex. The protein resides in the cytoskeleton. Its subcellular location is the spindle. Functionally, in the 1-cell embryo, probably together with gpr-2, controls nuclear rotation and spindle elongation during mitosis. Complex of gpr-1 and gpr-2, in association with lin-5, activates G-protein signaling to affect mitotic spindle force. Polarity determinants (par genes) may regulate lin-5/gpr-1/gpr-2/goa-1 locally to create the asymmetric forces that drive spindle movement. The chain is G-protein regulator 1 (gpr-1) from Caenorhabditis elegans.